Consider the following 517-residue polypeptide: GMP synthase [glutamine-hydrolyzing] (517 aa).

In terms of domain architecture, Glutamine amidotransferase type-1 spans 11-202 (KIIALDFGSQ…AFDVCGAKAN (192 aa)). Cys-88 acts as the Nucleophile in catalysis. Active-site residues include His-176 and Glu-178. The GMPS ATP-PPase domain occupies 203–392 (WTMDDFIDMQ…LGIPHELVWR (190 aa)). 230–236 (SGGVDSS) lines the ATP pocket.

Homodimer.

The catalysed reaction is XMP + L-glutamine + ATP + H2O = GMP + L-glutamate + AMP + diphosphate + 2 H(+). The protein operates within purine metabolism; GMP biosynthesis; GMP from XMP (L-Gln route): step 1/1. Functionally, catalyzes the synthesis of GMP from XMP. The protein is GMP synthase [glutamine-hydrolyzing] of Limosilactobacillus reuteri (strain DSM 20016) (Lactobacillus reuteri).